A 224-amino-acid chain; its full sequence is Germin-like protein 8-5 (224 aa).

The N-terminal stretch at 1–22 (MASPSSLCLLAALALISWQAMA) is a signal peptide. A disulfide bond links cysteine 32 and cysteine 47. Residues 62 to 212 (AKLDTPRKTN…AFQVEKGTID (151 aa)) enclose the Cupin type-1 domain. Asparagine 76 carries N-linked (GlcNAc...) asparagine glycosylation. Mn(2+) contacts are provided by histidine 109, histidine 111, and glutamate 116. Asparagine 135 is a glycosylation site (N-linked (GlcNAc...) asparagine). Histidine 157 serves as a coordination point for Mn(2+).

It belongs to the germin family. In terms of assembly, oligomer (believed to be a pentamer but probably hexamer).

Its subcellular location is the secreted. It localises to the extracellular space. The protein resides in the apoplast. Functionally, plays a role in broad-spectrum disease resistance. Probably has no oxalate oxidase activity even if the active site is conserved. The sequence is that of Germin-like protein 8-5 from Oryza sativa subsp. japonica (Rice).